The sequence spans 85 residues: Senescence-associated and QQS-related protein (85 aa).

The span at 1–24 shows a compositional bias: basic and acidic residues; sequence MSFRKVEKKPTEMGRNMTHEKSDS. Disordered regions lie at residues 1–35 and 55–85; these read MSFR…PMTV and SGKA…FPNY. Positions 58–77 are enriched in polar residues; sequence ARSNYNLTGTAKGTGPINSF.

As to expression, expressed predominantly within leaves and cotyledons vasculatures. Mainly observed in fully expanded leaves, at the base of mature inflorescences, in senescing leaves and cauline leaves, and, to a lower extent, in hypocotyls and rosette leaves prior to flowering.

Plays a role in carbon allocation, including during senescence and stresses, thus impacting starch accumulation. This is Senescence-associated and QQS-related protein from Arabidopsis thaliana (Mouse-ear cress).